The chain runs to 214 residues: uncharacterized protein (214 aa).

The signal sequence occupies residues 1–17 (MLKKIIILFLGVFVLSG). Cys18 carries N-palmitoyl cysteine lipidation. Cys18 is lipidated: S-diacylglycerol cysteine. Residues 64–77 (DNLDDPEDDDDDYD) are compositionally biased toward acidic residues. Disordered stretches follow at residues 64–83 (DNLD…LRGE), 106–138 (YKAE…KERK), and 166–197 (TANQ…SKVK). The stretch at 120-162 (TLSKANKKVRKDNTDKERKMQEELDQIKAMLRETKRDISKYTC) forms a coiled coil.

Its subcellular location is the cell membrane. This is an uncharacterized protein from Rickettsia bellii (strain RML369-C).